The primary structure comprises 321 residues: tRNA-dihydrouridine synthase B (321 aa).

Residues Pro16 to Ala18 and Gln70 contribute to the FMN site. Residue Cys100 is the Proton donor of the active site. Residues Lys139, Asn200–Asp202, and Gly224–Arg225 contribute to the FMN site.

It belongs to the Dus family. DusB subfamily. FMN serves as cofactor.

The enzyme catalyses a 5,6-dihydrouridine in tRNA + NAD(+) = a uridine in tRNA + NADH + H(+). The catalysed reaction is a 5,6-dihydrouridine in tRNA + NADP(+) = a uridine in tRNA + NADPH + H(+). In terms of biological role, catalyzes the synthesis of 5,6-dihydrouridine (D), a modified base found in the D-loop of most tRNAs, via the reduction of the C5-C6 double bond in target uridines. This chain is tRNA-dihydrouridine synthase B, found in Shigella flexneri.